The primary structure comprises 1300 residues: Phospholipid-transporting ATPase IK (1300 aa).

Residues 1–11 are compositionally biased toward polar residues; sequence MGTGPAQTPRS. The interval 1–98 is disordered; that stretch reads MGTGPAQTPR…SLGQREDLQD (98 aa). Topologically, residues 1–149 are cytoplasmic; sequence MGTGPAQTPR…TAKYNFYSFL (149 aa). Residues 65-74 are compositionally biased toward basic residues; it reads RRHKAQPGRA. A helical membrane pass occupies residues 150–171; that stretch reads PLNLYEQFHRVSNLFFLIIIIL. Residues 172 to 177 are Exoplasmic loop-facing; it reads QSIPDI. The helical transmembrane segment at 178–197 threads the bilayer; that stretch reads STLPWFSLSTPMVCLLFIRA. At 198-381 the chain is on the cytoplasmic side; sequence TRDLVDDMGR…TKLDLLMNKL (184 aa). A helical transmembrane segment spans residues 382 to 403; that stretch reads VVVIFISVVLVCLVLAFGFGFS. The Exoplasmic loop segment spans residues 404–430; sequence VKEFKDHHYYLSGVHGSSVAAESFFVF. The chain crosses the membrane as a helical span at residues 431–452; that stretch reads WSFLILLSVTIPMSMFILSEFI. At 453-995 the chain is on the cytoplasmic side; the sequence is YLGNSVFIDW…GRWSYVRICK (543 aa). The 4-aspartylphosphate intermediate role is filled by Asp495. The ATP site is built by Asp495, Lys496, Thr497, Glu596, Phe637, Lys660, Arg693, Thr763, Gly764, Asp765, Arg913, and Lys919. Residue Asp495 coordinates Mg(2+). Thr497 provides a ligand contact to Mg(2+). Residue Asp939 coordinates Mg(2+). Residues Asn942 and Asp943 each contribute to the ATP site. Mg(2+) is bound at residue Asp943. A helical membrane pass occupies residues 996–1016; the sequence is FLRYFFYKSMASMMVQVWFAC. The Exoplasmic loop portion of the chain corresponds to 1017–1028; sequence YNGFTGQPLYEG. Residues 1029–1048 traverse the membrane as a helical segment; it reads WFLALFNLLYSTLPVLYIGL. The Cytoplasmic segment spans residues 1049–1078; the sequence is FEQDVSAEQSLEKPELYVVGQKDELFNYWV. The helical transmembrane segment at 1079–1100 threads the bilayer; that stretch reads FVQAIAHGVTTSLVNFFMTLWI. Topologically, residues 1101-1112 are exoplasmic loop; the sequence is SRDTAGPASFSD. Residues 1113-1135 traverse the membrane as a helical segment; it reads HQSFAVVVALSCLLSITMEVILI. The Cytoplasmic segment spans residues 1136–1141; it reads IKYWTA. Residues 1142-1162 form a helical membrane-spanning segment; sequence LCVATILLSLGFYAIMTTTTQ. At 1163–1182 the chain is on the exoplasmic loop side; it reads SFWLFRVSPTTFPFLYADLS. Residues 1183–1207 form a helical membrane-spanning segment; it reads VMSSPSILLVVLLSVSINTFPVLAL. At 1208-1300 the chain is on the cytoplasmic side; that stretch reads RVIFPALKEL…EAASSPKESQ (93 aa). Residues 1272 to 1300 are disordered; that stretch reads RGPGVSSDIASESLDPSDEEAASSPKESQ.

Belongs to the cation transport ATPase (P-type) (TC 3.A.3) family. Type IV subfamily. Mg(2+) is required as a cofactor. As to expression, isoform 3 was only detected in testis.

The protein resides in the cytoplasmic vesicle. The protein localises to the secretory vesicle. It localises to the acrosome membrane. Its subcellular location is the endoplasmic reticulum membrane. It catalyses the reaction ATP + H2O + phospholipidSide 1 = ADP + phosphate + phospholipidSide 2.. The enzyme catalyses a 1,2-diacyl-sn-glycero-3-phospho-L-serine(out) + ATP + H2O = a 1,2-diacyl-sn-glycero-3-phospho-L-serine(in) + ADP + phosphate + H(+). P4-ATPase flippase which catalyzes the hydrolysis of ATP coupled to the transport of aminophospholipids from the outer to the inner leaflet of various membranes and ensures the maintenance of asymmetric distribution of phospholipids. Phospholipid translocation also seems to be implicated in vesicle formation and in uptake of lipid signaling molecules. May be responsible for the maintenance of asymmetric distribution of phosphatidylserine (PS) in spermatozoa membranes. Involved in acrosome reactions and binding of spermatozoa to zona pellucida. The sequence is that of Phospholipid-transporting ATPase IK from Homo sapiens (Human).